The primary structure comprises 186 residues: Large ribosomal subunit protein bL9 (186 aa).

Positions 151 to 167 (PEEAEKQARGEAIMREE) are enriched in basic and acidic residues. Residues 151 to 186 (PEEAEKQARGEAIMREESEYELETGEEVAEGPEQTA) are disordered. The segment covering 168 to 180 (SEYELETGEEVAE) has biased composition (acidic residues).

The protein belongs to the bacterial ribosomal protein bL9 family.

In terms of biological role, binds to the 23S rRNA. In Acidiphilium cryptum (strain JF-5), this protein is Large ribosomal subunit protein bL9.